Here is a 61-residue protein sequence, read N- to C-terminus: Potassium channel toxin kappa-KTx 2.8 (61 aa).

Positions 1–21 (GTVYVFLLLLAFGIFTDISNA) are cleaved as a signal peptide. Residues 22–35 (CSEQMDDEDSYEVE) constitute a propeptide that is removed on maturation. 2 disulfides stabilise this stretch: C41–C59 and C45–C55.

The protein belongs to the short scorpion toxin superfamily. Potassium channel inhibitor kappa-KTx family. Kappa-KTx 2 subfamily. In terms of tissue distribution, expressed by the venom gland.

It is found in the secreted. In terms of biological role, voltage-gated potassium channel inhibitor (Kv) that acts on Kv1.3/KCNA3 and Kv7.1/KCNQ1. 1 uM of the toxin inhibits Kv1.3/KCNA3 currents by 35.1%, whereas 10 uM of the toxin inhibits Kv7.1/KCNQ1 currents by 44.9%. This chain is Potassium channel toxin kappa-KTx 2.8, found in Heterometrus petersii (Asian forest scorpion).